We begin with the raw amino-acid sequence, 107 residues long: Regulatory protein SoxS (107 aa).

In terms of domain architecture, HTH araC/xylS-type spans 8–106 (QTLIEWIDEH…DRTPSDYRHR (99 aa)). 2 consecutive DNA-binding regions (H-T-H motif) follow at residues 25–46 (DVVAKKSGYSKWYLQRMFRTVT) and 73–96 (IFDIAMDLGYVSQQTFSRVFRREF).

It is found in the cytoplasm. In terms of biological role, transcriptional activator of the superoxide response regulon of E.coli that includes at least 10 genes such as sodA, nfo, zwf and micF. Binds the DNA sequence 5'-GCACN(7)CAA-3'. It also facilitates the subsequent binding of RNA polymerase to the micF and the nfo promoters. This chain is Regulatory protein SoxS (soxS), found in Salmonella typhimurium (strain LT2 / SGSC1412 / ATCC 700720).